Consider the following 619-residue polypeptide: Protein CPn_1016/CP_0837/CPj1016/CpB1054 (619 aa).

Residues 591 to 619 (NAKKSEEQTSPQETPEVIRVSYPTTTSAL) are disordered.

This sequence belongs to the chlamydial CPn_1016/CT_858/TC_0248 family.

This chain is Protein CPn_1016/CP_0837/CPj1016/CpB1054, found in Chlamydia pneumoniae (Chlamydophila pneumoniae).